Reading from the N-terminus, the 887-residue chain is Exocyst complex component SEC3A (887 aa).

Coiled-coil stretches lie at residues 221–248 (IGEA…AILE) and 281–301 (LRHM…LEMQ). Residues 542–581 (GAGNDKKSQSNNDDGNDDDDLGIMDIDETDKKPGKNSPDL) are disordered. A compositionally biased stretch (acidic residues) spans 555-569 (DGNDDDDLGIMDIDE).

Belongs to the SEC3 family. In terms of assembly, the exocyst complex is composed of SEC3, SEC5, SEC6, SEC8, SEC10, EXO70A1 and EXO84B. Interacts with EXO70A1, SEC5A and ICR1, but not with ICR2. Binds to EXO70H1. Binds directly to B1L. In terms of tissue distribution, widely expressed. Preferentially expressed in tissues containing dividing and expanding cells, such as the shoot apical meristem, root tip, lateral root primordia and developing embryos.

The protein localises to the cytoplasm. It localises to the cytosol. The protein resides in the cell membrane. Its subcellular location is the cytoskeleton. It is found in the phragmoplast. The protein localises to the secreted. It localises to the extracellular exosome. Functionally, component of the exocyst complex involved in the docking of exocytic vesicles with fusion sites on the plasma membrane during regulated or polarized secretion. Involved in polarized cell growth and organ morphogenesis. During cytokinesis, involved in cell plate initiation, cell plate maturation and formation of new primary cell wall. During cytokinesis, involved in cell plate initiation, cell plate maturation and formation of new primary cell wall. This is Exocyst complex component SEC3A from Arabidopsis thaliana (Mouse-ear cress).